Consider the following 140-residue polypeptide: MAIERTFSMIKPDATKRNLTGAITKIFEDNGLRVIASKRVWMSKREAEGFYAVHKERPFFGELVDGMTSGPTVVQVLEGEGAILKNREIMGATNPANAAEGTIRKIHALSIGENSVHGSDAPETAAVEIAYWFSETEIVG.

Lys-11, Phe-59, Arg-87, Thr-93, Arg-104, and Asn-114 together coordinate ATP. The Pros-phosphohistidine intermediate role is filled by His-117.

It belongs to the NDK family. Homotetramer. Requires Mg(2+) as cofactor.

Its subcellular location is the cytoplasm. The enzyme catalyses a 2'-deoxyribonucleoside 5'-diphosphate + ATP = a 2'-deoxyribonucleoside 5'-triphosphate + ADP. It catalyses the reaction a ribonucleoside 5'-diphosphate + ATP = a ribonucleoside 5'-triphosphate + ADP. Its function is as follows. Major role in the synthesis of nucleoside triphosphates other than ATP. The ATP gamma phosphate is transferred to the NDP beta phosphate via a ping-pong mechanism, using a phosphorylated active-site intermediate. The protein is Nucleoside diphosphate kinase of Rhizobium rhizogenes (strain K84 / ATCC BAA-868) (Agrobacterium radiobacter).